We begin with the raw amino-acid sequence, 170 residues long: Centrin-2 (170 aa).

A disordered region spans residues 1 to 21; that stretch reads MQRGALRGASPTARRRLVDRP. EF-hand domains are found at residues 26–61, 62–97, 99–134, and 135–170; these read DEIE…LGFE, TKNP…KLGD, ESRE…LGET, and MSED…KTFP. Ca(2+) contacts are provided by Asp-39, Asp-41, Ser-43, Met-45, and Glu-50.

This sequence belongs to the centrin family. Monomer. Does not homooligomerize.

It localises to the cytoplasm. The protein resides in the cytoskeleton. Its subcellular location is the microtubule organizing center. The protein localises to the centrosome. Functionally, in tachyzoites, plays an essential role in microneme secretion that ensures parasite motility and attachment to, invasion of and egress from host cells. Also involved in the architecture of the peripheral annuli where it appears to regulate the localization of PAP2. In association with the myosin motor MyoJ, involved in the constriction of the basal complex at the end of daughter cell division in an actin-dependent manner; the basal complex is a cytoskeletal structure formed at the tachyzoite basal pole during daughter cell formation. May be involved in parasite replication. The polypeptide is Centrin-2 (Toxoplasma gondii (strain ATCC 50611 / Me49)).